Consider the following 349-residue polypeptide: Phosphoribosylformylglycinamidine cyclo-ligase (349 aa).

This sequence belongs to the AIR synthase family.

It is found in the cytoplasm. It carries out the reaction 2-formamido-N(1)-(5-O-phospho-beta-D-ribosyl)acetamidine + ATP = 5-amino-1-(5-phospho-beta-D-ribosyl)imidazole + ADP + phosphate + H(+). It functions in the pathway purine metabolism; IMP biosynthesis via de novo pathway; 5-amino-1-(5-phospho-D-ribosyl)imidazole from N(2)-formyl-N(1)-(5-phospho-D-ribosyl)glycinamide: step 2/2. The chain is Phosphoribosylformylglycinamidine cyclo-ligase from Lawsonia intracellularis (strain PHE/MN1-00).